We begin with the raw amino-acid sequence, 375 residues long: MSETLELASALIARRSVTPMDAGCQQLLAERLRPLGFDCERLDYGEVNNLWARRGQQGPVFCFAGHTDVVPPGPEAQWRHPPFQPVVEQGLLYGRGAADMKGSVAAFVTALERYLAGGHRPRGSLALLITSDEEGPAVDGTRHVVETLSERGERIDWCLVGEPSSTERVGDVVKVGRRGSLNGRLTVRGDQGHVAYPHLARNPVHQALAALDELVTTRWDEGNDHFPPTSFQISNVQAGTGATNVIPGELEVTFNFRFSTEVTADELQQRVEAVLDRHGLDGRIDWSLSGEPFLTAEGELVAATQAAVRDVCGDPPVLSTSGGTSDGRFIAPTGAQVLELGPVNATIHKVNEHVRAADLDTLSRIYEGVLRRLLG.

Residue H66 coordinates Zn(2+). D68 is a catalytic residue. D99 serves as a coordination point for Zn(2+). E133 serves as the catalytic Proton acceptor. Positions 134, 162, and 348 each coordinate Zn(2+).

This sequence belongs to the peptidase M20A family. DapE subfamily. Homodimer. It depends on Zn(2+) as a cofactor. The cofactor is Co(2+).

The catalysed reaction is N-succinyl-(2S,6S)-2,6-diaminopimelate + H2O = (2S,6S)-2,6-diaminopimelate + succinate. It functions in the pathway amino-acid biosynthesis; L-lysine biosynthesis via DAP pathway; LL-2,6-diaminopimelate from (S)-tetrahydrodipicolinate (succinylase route): step 3/3. Its function is as follows. Catalyzes the hydrolysis of N-succinyl-L,L-diaminopimelic acid (SDAP), forming succinate and LL-2,6-diaminopimelate (DAP), an intermediate involved in the bacterial biosynthesis of lysine and meso-diaminopimelic acid, an essential component of bacterial cell walls. This Alkalilimnicola ehrlichii (strain ATCC BAA-1101 / DSM 17681 / MLHE-1) protein is Succinyl-diaminopimelate desuccinylase.